Here is a 584-residue protein sequence, read N- to C-terminus: Eukaryotic translation initiation factor 3 subunit D (584 aa).

The tract at residues 118-184 (IFTRGRGQRG…KDYDKPQRNR (67 aa)) is disordered. Positions 127-167 (GRGGQDTRGGGRQQFQRGGRGGQQYGGGGYSDRGGGRGGGA) are enriched in gly residues. The span at 173 to 184 (GWKDYDKPQRNR) shows a compositional bias: basic and acidic residues. The segment at 312-326 (ALDMVTVNENAADAP) is RNA gate. A disordered region spans residues 563–584 (PANGLDDDDEGPEPEGVAEEED). Residues 567–584 (LDDDDEGPEPEGVAEEED) show a composition bias toward acidic residues.

It belongs to the eIF-3 subunit D family. In terms of assembly, component of the eukaryotic translation initiation factor 3 (eIF-3) complex.

It localises to the cytoplasm. MRNA cap-binding component of the eukaryotic translation initiation factor 3 (eIF-3) complex, which is involved in protein synthesis of a specialized repertoire of mRNAs and, together with other initiation factors, stimulates binding of mRNA and methionyl-tRNAi to the 40S ribosome. The eIF-3 complex specifically targets and initiates translation of a subset of mRNAs involved in cell proliferation. In the eIF-3 complex, eif3d specifically recognizes and binds the 7-methylguanosine cap of a subset of mRNAs. The protein is Eukaryotic translation initiation factor 3 subunit D of Chaetomium globosum (strain ATCC 6205 / CBS 148.51 / DSM 1962 / NBRC 6347 / NRRL 1970) (Soil fungus).